We begin with the raw amino-acid sequence, 413 residues long: Tryptophan synthase beta chain (413 aa).

Lys107 carries the post-translational modification N6-(pyridoxal phosphate)lysine.

It belongs to the TrpB family. In terms of assembly, tetramer of two alpha and two beta chains. Pyridoxal 5'-phosphate serves as cofactor.

The catalysed reaction is (1S,2R)-1-C-(indol-3-yl)glycerol 3-phosphate + L-serine = D-glyceraldehyde 3-phosphate + L-tryptophan + H2O. Its pathway is amino-acid biosynthesis; L-tryptophan biosynthesis; L-tryptophan from chorismate: step 5/5. Functionally, the beta subunit is responsible for the synthesis of L-tryptophan from indole and L-serine. The chain is Tryptophan synthase beta chain from Trichormus variabilis (strain ATCC 29413 / PCC 7937) (Anabaena variabilis).